A 136-amino-acid chain; its full sequence is Urease subunit beta (136 aa).

The disordered stretch occupies residues 113-136 (NDEYAGVFGDNGAENVNKKGRKRS).

It belongs to the urease beta subunit family. As to quaternary structure, heterotrimer of UreA (gamma), UreB (beta) and UreC (alpha) subunits. Three heterotrimers associate to form the active enzyme.

The protein resides in the cytoplasm. It catalyses the reaction urea + 2 H2O + H(+) = hydrogencarbonate + 2 NH4(+). Its pathway is nitrogen metabolism; urea degradation; CO(2) and NH(3) from urea (urease route): step 1/1. This chain is Urease subunit beta, found in Staphylococcus aureus (strain Newman).